Consider the following 685-residue polypeptide: Kinesin-like protein KIP2 (685 aa).

2 disordered regions span residues 11–46 (EHVG…GPAQ) and 63–101 (SRPS…SGAS). Over residues 86-101 (GSPQSPDAPSSASGAS) the composition is skewed to low complexity. One can recognise a Kinesin motor domain in the interval 113–446 (NVSVAIRIKP…VRFASRAKNI (334 aa)). An ATP-binding site is contributed by 185–192 (GMTGSGKT). Coiled-coil stretches lie at residues 464-486 (IIQN…RRSA) and 520-663 (LEVE…SALS). Residues 485–510 (SAAAPSGNGSTSPLDSPGVGGTSLSE) are disordered.

It belongs to the TRAFAC class myosin-kinesin ATPase superfamily. Kinesin family.

It is found in the cytoplasm. Its subcellular location is the cytoskeleton. Required for assembly of the mitotic spindle. This is Kinesin-like protein KIP2 (KIP2) from Eremothecium gossypii (strain ATCC 10895 / CBS 109.51 / FGSC 9923 / NRRL Y-1056) (Yeast).